The following is a 592-amino-acid chain: Transmembrane 9 superfamily member 3 (592 aa).

The N-terminal stretch at 1-19 is a signal peptide; sequence MRLPTTLLLFIGALIFSGA. Residues 20–229 are Lumenal-facing; sequence GTVRSDASDH…SLPHHLEIHW (210 aa). Residues 230–250 form a helical membrane-spanning segment; it reads FSIINSCVTVLLLTGFLATIL. Over 251-302 the chain is Cytoplasmic; the sequence is MRVLKNDFMKYAQDEEAADDQEETGWKYIHGDVFRFPKNKSLFAASLGSGTQ. Residues 303–323 traverse the membrane as a helical segment; the sequence is LFTLTIFIFMLSLVGVFYPYN. Residues 324-325 lie on the Lumenal side of the membrane; it reads RG. A helical transmembrane segment spans residues 326–346; it reads ALFTALVVIYALTSGIAGYTA. At 347–365 the chain is on the cytoplasmic side; sequence SSFYCQLEGKNWVRNLLLT. The helical transmembrane segment at 366 to 386 threads the bilayer; it reads GGLFCGPLFLTFCFLNTVAIA. The Lumenal segment spans residues 387–397; it reads YSATAALPFGT. The helical transmembrane segment at 398-418 threads the bilayer; the sequence is IIVIVLIWTLVTSPLLVLGGI. Residues 419–452 lie on the Cytoplasmic side of the membrane; it reads AGKNSKAEFQAPVRTTKYPREIPPLPWYRSAVPQ. The chain crosses the membrane as a helical span at residues 453-473; it reads MAMAGFLPFSAIYIELYYIFA. The Lumenal portion of the chain corresponds to 474 to 485; the sequence is SVWGHRIYTIYS. Residues 486-506 form a helical membrane-spanning segment; that stretch reads ILFIVFIILLIVTAFITVALT. Residues 507–521 are Cytoplasmic-facing; sequence YFQLAAEDHEWWWRS. Residues 522 to 542 form a helical membrane-spanning segment; that stretch reads FLCGGSTGLFIYAYCLYYYYA. Residues 543–553 lie on the Lumenal side of the membrane; the sequence is RSDMSGFMQTS. A helical transmembrane segment spans residues 554–574; that stretch reads FFFGYMACICYGFFLMLGTVG. At 575 to 592 the chain is on the cytoplasmic side; sequence FRAALLFVRHIYRSIKCE. Positions 581–586 match the Endoplasmic reticulum export signal motif; that stretch reads FVRHIY. The Golgi retention signal signature appears at 590 to 592; the sequence is KCE.

It belongs to the nonaspanin (TM9SF) (TC 9.A.2) family.

The protein localises to the endosome membrane. It localises to the golgi apparatus membrane. In Arabidopsis thaliana (Mouse-ear cress), this protein is Transmembrane 9 superfamily member 3.